A 325-amino-acid polypeptide reads, in one-letter code: Glutarate 2-hydroxylase (325 aa).

Fe cation-binding residues include His-160, Asp-162, and His-292.

Belongs to the glutarate hydroxylase family. As to quaternary structure, homotetramer. Fe(2+) is required as a cofactor.

It catalyses the reaction glutarate + 2-oxoglutarate + O2 = (S)-2-hydroxyglutarate + succinate + CO2. It functions in the pathway amino-acid degradation. Functionally, acts as an alpha-ketoglutarate-dependent dioxygenase catalyzing hydroxylation of glutarate (GA) to L-2-hydroxyglutarate (L2HG). Functions in a L-lysine degradation pathway that proceeds via cadaverine, glutarate and L-2-hydroxyglutarate. The chain is Glutarate 2-hydroxylase from Escherichia coli O127:H6 (strain E2348/69 / EPEC).